Reading from the N-terminus, the 388-residue chain is 3-ketoacyl-CoA thiolase (388 aa).

The active-site Acyl-thioester intermediate is C91. Active-site proton acceptor residues include H343 and C373.

This sequence belongs to the thiolase-like superfamily. Thiolase family. As to quaternary structure, heterotetramer of two alpha chains (FadB) and two beta chains (FadA).

It is found in the cytoplasm. The catalysed reaction is an acyl-CoA + acetyl-CoA = a 3-oxoacyl-CoA + CoA. It participates in lipid metabolism; fatty acid beta-oxidation. Functionally, catalyzes the final step of fatty acid oxidation in which acetyl-CoA is released and the CoA ester of a fatty acid two carbons shorter is formed. The polypeptide is 3-ketoacyl-CoA thiolase (Photorhabdus laumondii subsp. laumondii (strain DSM 15139 / CIP 105565 / TT01) (Photorhabdus luminescens subsp. laumondii)).